The primary structure comprises 440 residues: Signal recognition particle 54 kDa protein (440 aa).

GTP contacts are provided by residues 104-111 (GLQGSGKT), 184-188 (DTAGR), and 242-245 (TKLD).

The protein belongs to the GTP-binding SRP family. SRP54 subfamily. As to quaternary structure, part of the signal recognition particle protein translocation system, which is composed of SRP and FtsY. Archaeal SRP consists of a 7S RNA molecule of 300 nucleotides and two protein subunits: SRP54 and SRP19.

It is found in the cytoplasm. It catalyses the reaction GTP + H2O = GDP + phosphate + H(+). In terms of biological role, involved in targeting and insertion of nascent membrane proteins into the cytoplasmic membrane. Binds to the hydrophobic signal sequence of the ribosome-nascent chain (RNC) as it emerges from the ribosomes. The SRP-RNC complex is then targeted to the cytoplasmic membrane where it interacts with the SRP receptor FtsY. This Methanosarcina acetivorans (strain ATCC 35395 / DSM 2834 / JCM 12185 / C2A) protein is Signal recognition particle 54 kDa protein.